The primary structure comprises 105 residues: Large ribosomal subunit protein uL24 (105 aa).

It belongs to the universal ribosomal protein uL24 family. Part of the 50S ribosomal subunit.

One of two assembly initiator proteins, it binds directly to the 5'-end of the 23S rRNA, where it nucleates assembly of the 50S subunit. Functionally, one of the proteins that surrounds the polypeptide exit tunnel on the outside of the subunit. In Rhodospirillum centenum (strain ATCC 51521 / SW), this protein is Large ribosomal subunit protein uL24.